A 98-amino-acid polypeptide reads, in one-letter code: uncharacterized protein (98 aa).

The protein belongs to the IS150/IS1296 orfA family.

This is an uncharacterized protein from Haemophilus influenzae (strain ATCC 51907 / DSM 11121 / KW20 / Rd).